The following is an 877-amino-acid chain: Potassium transporter 23 (877 aa).

2 disordered regions span residues 1-60 (MDDD…SLDG) and 72-92 (ASAGGASGGGGGGGPLSRASS). At 1 to 126 (MDDDDSGIQE…RGAHGHSSKE (126 aa)) the chain is on the cytoplasmic side. The segment covering 12-28 (PAPPPPPPPPPPPPPPL) has biased composition (pro residues). Residues 76-86 (GASGGGGGGGP) show a composition bias toward gly residues. The chain crosses the membrane as a helical span at residues 127 to 147 (ISMLSTVAMAFQTLGVVYGDM). Over 148–173 (GTSPLYVFSDVFSKVPIKSEVEILGA) the chain is Extracellular. A helical transmembrane segment spans residues 174-194 (LSLVMYTIALIPFAKYVFIVL). The Cytoplasmic segment spans residues 195–260 (KANDNGEGGT…SLEKNPVFKN (66 aa)). A helical transmembrane segment spans residues 261–281 (ILLFLVLMGTSMVIGDGILTP). Over 282–295 (SMSVMSAVSGLQGR) the chain is Extracellular. A helical membrane pass occupies residues 296 to 316 (VPGFGTDAVVIVSILFLVLLF). Over 317-325 (SVQRFGTGK) the chain is Cytoplasmic. The chain crosses the membrane as a helical span at residues 326–346 (VGFMFAPILALWFINLGTIGI). Residues 347–379 (YNLAKYDISVVRAFNPVYIYLFFQTNGIKAWSA) lie on the Extracellular side of the membrane. Residues 380–400 (LGGCVLCITGAEAMFADLGHF) form a helical membrane-spanning segment. At 401–406 (SVKSIQ) the chain is on the cytoplasmic side. The helical transmembrane segment at 407-427 (VAFTAVVFPCLLIAYMGQAAY) threads the bilayer. Residues 428 to 441 (LMKYPFAVERIFYD) lie on the Extracellular side of the membrane. A helical transmembrane segment spans residues 442 to 462 (SVPEILFWPVFVIATLAAMIA). Over 463–498 (SQAMISATFSCIKQAMALGCFPRIKIIHTSKKVMGQ) the chain is Cytoplasmic. Residues 499-519 (IYIPVMNWFLMVMCIIIVATF) form a helical membrane-spanning segment. The Extracellular segment spans residues 520-524 (RSTND). Residues 525–545 (IANAYGIAEVGVMMVSTALVT) traverse the membrane as a helical segment. Over 546–555 (LVMLLIWQTN) the chain is Cytoplasmic. A helical membrane pass occupies residues 556–578 (LFLVMCFPVIFGSVEFVYLTAVL). At 579–583 (SKIQE) the chain is on the extracellular side. Residues 584 to 604 (GGWLPLAFSSLFLCIMYTWNY) form a helical membrane-spanning segment. The Cytoplasmic segment spans residues 605–877 (GSVLKYQSEM…IMRVGMTYMV (273 aa)).

This sequence belongs to the HAK/KUP transporter (TC 2.A.72.3) family.

It is found in the membrane. Its function is as follows. High-affinity potassium transporter. The sequence is that of Potassium transporter 23 (HAK23) from Oryza sativa subsp. japonica (Rice).